The primary structure comprises 298 residues: MFKSGFVTIVGRPNVGKSTLLNYIMGEKLSIVSNKPQTTRNNIQTILTGDDYQMIFVDTPGIHKPKHKLGEYMVNSAKESTKDVDLVLFLTNPDEEIGKGDKFILETLRDKKCPVFLVLNKVDESTQDRVAKSLEMYSKEFKFAEIVPISAIKGKNVDVLVELMKKAMPEGPKYYPDDMITDVQEKFVVSEIIREKALRTLRDEVPHGIAVDIIQMKQNEIGTYHIEVDLICEKDSHKGIIIGKNGQTLKRIGENSRYELERFLRSKVNLKIWVKVRKEWRDNQLLLKELGYKANSKK.

The 168-residue stretch at 3-170 (KSGFVTIVGR…VELMKKAMPE (168 aa)) folds into the Era-type G domain. Positions 11 to 18 (GRPNVGKS) are G1. Residue 11 to 18 (GRPNVGKS) participates in GTP binding. Residues 37–41 (QTTRN) are G2. Residues 58 to 61 (DTPG) are G3. GTP contacts are provided by residues 58–62 (DTPGI) and 120–123 (NKVD). The segment at 120-123 (NKVD) is G4. The segment at 149–151 (ISA) is G5. In terms of domain architecture, KH type-2 spans 201 to 278 (LRDEVPHGIA…NLKIWVKVRK (78 aa)).

This sequence belongs to the TRAFAC class TrmE-Era-EngA-EngB-Septin-like GTPase superfamily. Era GTPase family. Monomer.

It localises to the cytoplasm. It is found in the cell membrane. Functionally, an essential GTPase that binds both GDP and GTP, with rapid nucleotide exchange. Plays a role in 16S rRNA processing and 30S ribosomal subunit biogenesis and possibly also in cell cycle regulation and energy metabolism. The polypeptide is GTPase Era (Clostridium beijerinckii (strain ATCC 51743 / NCIMB 8052) (Clostridium acetobutylicum)).